The following is a 289-amino-acid chain: Diaminopimelate epimerase (289 aa).

Positions 17, 47, and 67 each coordinate substrate. Residue Cys76 is the Proton donor of the active site. Substrate contacts are provided by residues 77–78 (GN), Asn164, Asn198, and 216–217 (ER). The Proton acceptor role is filled by Cys225. A substrate-binding site is contributed by 226-227 (GS).

It belongs to the diaminopimelate epimerase family. As to quaternary structure, homodimer.

The protein resides in the cytoplasm. The enzyme catalyses (2S,6S)-2,6-diaminopimelate = meso-2,6-diaminopimelate. It participates in amino-acid biosynthesis; L-lysine biosynthesis via DAP pathway; DL-2,6-diaminopimelate from LL-2,6-diaminopimelate: step 1/1. In terms of biological role, catalyzes the stereoinversion of LL-2,6-diaminopimelate (L,L-DAP) to meso-diaminopimelate (meso-DAP), a precursor of L-lysine and an essential component of the bacterial peptidoglycan. The polypeptide is Diaminopimelate epimerase (Bradyrhizobium sp. (strain ORS 278)).